A 315-amino-acid chain; its full sequence is Protein OPG185 (315 aa).

The N-terminal stretch at Met-1–Ser-16 is a signal peptide. The Ig-like V-type domain maps to Thr-17 to Glu-121. At Thr-17–Glu-279 the chain is on the virion surface side. The cysteines at positions 34 and 103 are disulfide-linked. Residues Asn-37, Asn-69, Asn-112, and Asn-161 are each glycosylated (N-linked (GlcNAc...) asparagine; by host). Polar residues predominate over residues Ile-192–Ser-202. The disordered stretch occupies residues Ile-192–Lys-214. Residue Asn-254 is glycosylated (N-linked (GlcNAc...) asparagine; by host). Residues Ile-280–Asn-303 traverse the membrane as a helical segment. Topologically, residues Lys-304 to Val-315 are intravirion.

This sequence belongs to the orthopoxvirus OPG185 family. As to quaternary structure, heterodimerizes with OPG040. The heterodimer OPG185-OPG040 interacts with components of the entry fusion complex OPG143 and OPG094. Heterodimer with C3/VPC protein; disulfide-linked. Post-translationally, glycosylated; contains phosphate and sulfate-substituted glycans. O-glycosylation is required for hemagglutination and hemadsorption activities of infected cell membranes.

It is found in the virion membrane. The protein localises to the host membrane. Functionally, prevents cell to cell fusion by interacting with and directing the viral OPG040 protein on the host plasma membrane. The OPG185-OPG040 complex associates with components of the entry fusion complex (EFC) presumably to avoid superinfection and syncytium formation. Via its interaction with C3/VCP protein, protects the infected cell and probably also the extracellular enveloped virus from complement attack. The polypeptide is Protein OPG185 (OPG185) (Vaccinia virus (strain Tian Tan) (VACV)).